We begin with the raw amino-acid sequence, 449 residues long: 23S rRNA (uracil(1939)-C(5))-methyltransferase RlmD (449 aa).

The 59-residue stretch at 12–70 (SKQLSAKQSFSVHQLDHLGAGIAQHQGKVVFIPGALPNETVQAQLTEQKKNYARAKLIK) folds into the TRAM domain. [4Fe-4S] cluster contacts are provided by cysteine 83, cysteine 89, cysteine 92, and cysteine 170. The S-adenosyl-L-methionine site is built by glutamine 282, phenylalanine 311, asparagine 316, glutamate 332, aspartate 359, and aspartate 379. Cysteine 405 acts as the Nucleophile in catalysis.

The protein belongs to the class I-like SAM-binding methyltransferase superfamily. RNA M5U methyltransferase family. RlmD subfamily.

The catalysed reaction is uridine(1939) in 23S rRNA + S-adenosyl-L-methionine = 5-methyluridine(1939) in 23S rRNA + S-adenosyl-L-homocysteine + H(+). Functionally, catalyzes the formation of 5-methyl-uridine at position 1939 (m5U1939) in 23S rRNA. The chain is 23S rRNA (uracil(1939)-C(5))-methyltransferase RlmD from Shewanella sp. (strain ANA-3).